We begin with the raw amino-acid sequence, 655 residues long: Macrolide export ATP-binding/permease protein MacB (655 aa).

Positions 6–244 constitute an ABC transporter domain; the sequence is IELRDVWREF…DALAGDEGPE (239 aa). 42–49 is an ATP binding site; that stretch reads GASGSGKS. The segment at 225 to 252 is disordered; the sequence is DQARPDAPPLDALAGDEGPEAPRPAPQP. Transmembrane regions (helical) follow at residues 280 to 300, 527 to 547, 583 to 603, and 620 to 640; these read LTMLGIIIGIAAVVSVVALGA, LTLLVSMIAVISLVVVGIGVM, VLVCLIGGVLGILLSLSIGVL, and SMVLAFVCSTLIGVAFGFLPA.

It belongs to the ABC transporter superfamily. Macrolide exporter (TC 3.A.1.122) family. Homodimer.

The protein resides in the cell inner membrane. In terms of biological role, non-canonical ABC transporter that contains transmembrane domains (TMD), which form a pore in the inner membrane, and an ATP-binding domain (NBD), which is responsible for energy generation. Confers resistance against macrolides. This Bordetella avium (strain 197N) protein is Macrolide export ATP-binding/permease protein MacB.